The primary structure comprises 137 residues: Large ribosomal subunit protein uL16 (137 aa).

Belongs to the universal ribosomal protein uL16 family. Part of the 50S ribosomal subunit.

Functionally, binds 23S rRNA and is also seen to make contacts with the A and possibly P site tRNAs. In Beijerinckia indica subsp. indica (strain ATCC 9039 / DSM 1715 / NCIMB 8712), this protein is Large ribosomal subunit protein uL16.